Consider the following 199-residue polypeptide: dCTP deaminase, dUMP-forming (199 aa).

DCTP contacts are provided by residues 101-106 (KSSLGR), Asp-119, 127-129 (TLE), Gln-148, Tyr-162, and Gln-174. Glu-129 acts as the Proton donor/acceptor in catalysis. Residues 163–199 (GSAAAGSKYQGQRGPTPSRSYLNFPLPSDAVDAVESR) are disordered. The segment covering 171–183 (YQGQRGPTPSRSY) has biased composition (polar residues).

It belongs to the dCTP deaminase family. In terms of assembly, homotrimer.

It catalyses the reaction dCTP + 2 H2O = dUMP + NH4(+) + diphosphate. It functions in the pathway pyrimidine metabolism; dUMP biosynthesis; dUMP from dCTP: step 1/1. Bifunctional enzyme that catalyzes both the deamination of dCTP to dUTP and the hydrolysis of dUTP to dUMP without releasing the toxic dUTP intermediate. The chain is dCTP deaminase, dUMP-forming from Nocardia farcinica (strain IFM 10152).